The following is a 421-amino-acid chain: Esterase LipQ (421 aa).

Catalysis depends on residues Ser249, Asp344, and His377.

This sequence belongs to the 'GDXG' lipolytic enzyme family.

It carries out the reaction hexadecanoate ester + H2O = an aliphatic alcohol + hexadecanoate + H(+). In terms of biological role, shows lipase activity. Is highly immunogenic and may play an important role in the virulence and pathogenesis of M.tuberculosis infection, by altering the balance of cytokines. Significantly down-regulates the expression level of pro-inflammatory cytokines (TNF-alpha and IFN-gamma) and up-regulates the level of anti-inflammatory cytokines such as IL-4 and IL-10 as compared to LPS stimulated macrophages. Also inhibits the expression of iNOS, TLR2 and transcription factor NF-kappa-B in LPS stimulated macrophages whereas the expression of TLR-4 remains unchanged. The protein is Esterase LipQ of Mycobacterium tuberculosis (strain ATCC 25618 / H37Rv).